The sequence spans 89 residues: Small ribosomal subunit protein uS15 (89 aa).

The protein belongs to the universal ribosomal protein uS15 family. Part of the 30S ribosomal subunit. Forms a bridge to the 50S subunit in the 70S ribosome, contacting the 23S rRNA.

Its function is as follows. One of the primary rRNA binding proteins, it binds directly to 16S rRNA where it helps nucleate assembly of the platform of the 30S subunit by binding and bridging several RNA helices of the 16S rRNA. Functionally, forms an intersubunit bridge (bridge B4) with the 23S rRNA of the 50S subunit in the ribosome. The chain is Small ribosomal subunit protein uS15 from Synechocystis sp. (strain ATCC 27184 / PCC 6803 / Kazusa).